The sequence spans 1172 residues: Laminin subunit beta-3 (1172 aa).

The signal sequence occupies residues 1 to 17 (MRPFFLLCFALPGLLHA). In terms of domain architecture, Laminin N-terminal spans 22–249 (SRGACYPPVG…AVSQLRLQGS (228 aa)). N-linked (GlcNAc...) asparagine glycosylation is present at N220. 24 disulfides stabilise this stretch: C250/C259, C252/C279, C281/C290, C293/C313, C316/C325, C318/C343, C346/C355, C358/C376, C379/C392, C381/C399, C401/C410, C413/C428, C431/C444, C433/C451, C453/C462, C465/C478, C481/C493, C483/C500, C502/C511, C519/C531, C534/C546, C536/C553, C555/C564, and C567/C578. 6 consecutive Laminin EGF-like domains span residues 250–315 (CFCH…ECQR), 316–378 (CDCN…TCIS), 379–430 (CECD…GCHR), 431–480 (CDCN…GCEP), 481–533 (CACD…GCRA), and 534–580 (CDCD…VCVA). Residues 579 to 785 (VACHPCFQTY…SLPDLTPTFN (207 aa)) are domain II. N604 is a glycosylation site (N-linked (GlcNAc...) asparagine). Residues 723–757 (EQSAQAAQQVSDSSRLLDQLRDSRREAERLVRQAG) are a coiled coil. Residues 786 to 816 (KLCGNSRQMACTPISCPGELCPQDNGTACGS) form a domain alpha region. N-linked (GlcNAc...) asparagine glycosylation is present at N810. Positions 817 to 1170 (RCRGVLPRAG…INGRVLYYAT (354 aa)) are domain I. Coiled coils occupy residues 831 to 884 (MAGQ…MEED) and 948 to 1133 (VLSQ…ELEL).

Laminin is a complex glycoprotein, consisting of three different polypeptide chains (alpha, beta, gamma), which are bound to each other by disulfide bonds into a cross-shaped molecule comprising one long and three short arms with globules at each end. Beta-3 is a subunit of laminin-5 (laminin-332 or epiligrin/kalinin/nicein). Interacts with ECM1. As to expression, found in the basement membranes (major component).

The protein resides in the secreted. The protein localises to the extracellular space. It is found in the extracellular matrix. Its subcellular location is the basement membrane. In terms of biological role, binding to cells via a high affinity receptor, laminin is thought to mediate the attachment, migration and organization of cells into tissues during embryonic development by interacting with other extracellular matrix components. This Homo sapiens (Human) protein is Laminin subunit beta-3 (LAMB3).